Consider the following 255-residue polypeptide: tRNA pseudouridine synthase A (255 aa).

D43 acts as the Nucleophile in catalysis. Substrate is bound at residue Y94.

This sequence belongs to the tRNA pseudouridine synthase TruA family.

The catalysed reaction is uridine(38/39/40) in tRNA = pseudouridine(38/39/40) in tRNA. Formation of pseudouridine at positions 38, 39 and 40 in the anticodon stem and loop of transfer RNAs. The sequence is that of tRNA pseudouridine synthase A from Pyrobaculum neutrophilum (strain DSM 2338 / JCM 9278 / NBRC 100436 / V24Sta) (Thermoproteus neutrophilus).